The chain runs to 436 residues: UPF0597 protein YhaM (436 aa).

This sequence belongs to the UPF0597 family.

The chain is UPF0597 protein YhaM from Salmonella paratyphi C (strain RKS4594).